A 122-amino-acid chain; its full sequence is Truncated CrmB protein (122 aa).

Its function is as follows. The protein is truncated in this strain and presumably inactive. It has similarities with variola virus CrmB, but the product is inactivated due to several premature stop codons. This chain is Truncated CrmB protein (OPG002), found in Bos taurus (Bovine).